Consider the following 320-residue polypeptide: Cyclin-H (320 aa).

Ser5 bears the Phosphoserine; by CDK8 mark. The residue at position 132 (Ser132) is a Phosphoserine. At Ser304 the chain carries Phosphoserine; by CDK8.

It belongs to the cyclin family. Cyclin C subfamily. As to quaternary structure, associates primarily with CDK7 and MAT1 to form the CAK complex. CAK can further associate with the core-TFIIH to form the TFIIH basal transcription factor.

It is found in the nucleus. Its function is as follows. Regulates CDK7, the catalytic subunit of the CDK-activating kinase (CAK) enzymatic complex. CAK activates the cyclin-associated kinases CDK1, CDK2, CDK4 and CDK6 by threonine phosphorylation. CAK complexed to the core-TFIIH basal transcription factor activates RNA polymerase II by serine phosphorylation of the repetitive C-terminal domain (CTD) of its large subunit (POLR2A), allowing its escape from the promoter and elongation of the transcripts. Involved in cell cycle control and in RNA transcription by RNA polymerase II. Its expression and activity are constant throughout the cell cycle. The polypeptide is Cyclin-H (CCNH) (Bos taurus (Bovine)).